We begin with the raw amino-acid sequence, 156 residues long: Putative pre-16S rRNA nuclease (156 aa).

Belongs to the YqgF nuclease family.

It is found in the cytoplasm. Could be a nuclease involved in processing of the 5'-end of pre-16S rRNA. The sequence is that of Putative pre-16S rRNA nuclease from Ehrlichia ruminantium (strain Gardel).